The following is a 535-amino-acid chain: T-complex protein 1 subunit epsilon (535 aa).

The protein belongs to the TCP-1 chaperonin family. Heterooligomeric complex of about 850 to 900 kDa that forms two stacked rings, 12 to 16 nm in diameter.

The protein resides in the cytoplasm. Functionally, molecular chaperone; assists the folding of proteins upon ATP hydrolysis. Known to play a role, in vitro, in the folding of actin and tubulin. This chain is T-complex protein 1 subunit epsilon, found in Avena sativa (Oat).